A 303-amino-acid chain; its full sequence is D-alanine--D-alanine ligase (303 aa).

One can recognise an ATP-grasp domain in the interval 103 to 293 (KTLFIKGGIP…FAQLCEKILE (191 aa)). Residue 130–179 (PYVIKPSRQGSSIGIEFVYDIKELDQAIKKSTQYDHVVLAEALITGKELT) coordinates ATP. Asp-247, Glu-260, and Asn-262 together coordinate Mg(2+).

It belongs to the D-alanine--D-alanine ligase family. It depends on Mg(2+) as a cofactor. Mn(2+) serves as cofactor.

The protein localises to the cytoplasm. The enzyme catalyses 2 D-alanine + ATP = D-alanyl-D-alanine + ADP + phosphate + H(+). Its pathway is cell wall biogenesis; peptidoglycan biosynthesis. Functionally, cell wall formation. In Methylacidiphilum infernorum (isolate V4) (Methylokorus infernorum (strain V4)), this protein is D-alanine--D-alanine ligase.